The sequence spans 579 residues: Copine-E (579 aa).

C2 domains follow at residues 45–175 (IDPS…KVIG) and 183–304 (QTGT…EFTL). Positions 80, 86, 145, 147, and 153 each coordinate Ca(2+). A VWFA domain is found at 345–552 (NLMIAIDCTA…KKYENDPEQL (208 aa)).

This sequence belongs to the copine family. Ca(2+) is required as a cofactor.

The sequence is that of Copine-E (cpnE) from Dictyostelium discoideum (Social amoeba).